We begin with the raw amino-acid sequence, 395 residues long: Mitogen-activated protein kinase 6 (395 aa).

The segment at methionine 1–asparagine 35 is disordered. The span at alanine 17–serine 27 shows a compositional bias: low complexity. The Protein kinase domain maps to lysine 63–leucine 348. ATP is bound by residues isoleucine 69–valine 77 and lysine 92. Aspartate 189 functions as the Proton acceptor in the catalytic mechanism. The residue at position 221 (threonine 221) is a Phosphothreonine. A TXY motif is present at residues threonine 221 to tyrosine 223. At tyrosine 223 the chain carries Phosphotyrosine. Phosphothreonine is present on threonine 226.

This sequence belongs to the protein kinase superfamily. CMGC Ser/Thr protein kinase family. MAP kinase subfamily. In terms of assembly, interacts with MEKK1, MKK1 and MKK2. May form a ternary complex with MEKK1 and MKK1 or MKK2. Interacts with NDPK2, AP2C1, MKP1 and PTP1. Interacts with DSPTP1B/MKP2, especially during HR-like responses triggered by fungal elicitors. Interacts with MKK4, MKK5 and MKK6. Binds to LIP5. Interacts with VQ4 and IKU1/VQ14. Interacts with RACK1A, RACK1B and RACK1C. Interacts with PTP1. Interacts with FLZ9. Binds to BASL and YDA. Post-translationally, dually phosphorylated on Thr-221 and Tyr-223, which activates the enzyme. Dephosphorylated by DSPTP1B/MKP2.

It is found in the cytoplasm. Its subcellular location is the nucleus. The protein localises to the cell cortex. It carries out the reaction L-seryl-[protein] + ATP = O-phospho-L-seryl-[protein] + ADP + H(+). It catalyses the reaction L-threonyl-[protein] + ATP = O-phospho-L-threonyl-[protein] + ADP + H(+). With respect to regulation, activated by threonine and tyrosine phosphorylation. Activated by the MAP kinase kinases MKK2, MKK3, MKK4, MKK5, MKK7 and MKK9. Activated in response to touch, wounding, low temperature, low humidity, salt stress, hydrogen peroxide, ozone, ACC (an ethylene precursor), jasmonic acid (JA), mastoparan and UVC. Activated in response to elicitors: oligogalacturonides, hexameric chitin fragments, fungal xylanase, and the bacterial flagellin and harpin. Activated upon Pseudomonas syringae pv. tomato DC3000 infection. Repressed by the protein phosphatase 2C AP2C1 and the protein-tyrosine-phosphatases MKP1 and PTP1. Repressed by DSPTP1B/MKP2-mediated dephosphorylation. Activated by polarized BASL. Triggered by MKKK20 in response to various abiotic stresses, including osmotic stress, cold and reactive oxygen species (ROS). Activated by MKK5 in response to abscisic acid (ABA). Mitogen-activated protein kinase (MAPK) which regulates abscisic acid (ABA) responses in a MAPKKK20-MKK5-MPK6 cascade involved in root growth (e.g. root cell division and elongation) and stomatal response. Involved in oxidative stress-mediated signaling cascade (such as ozone). Involved in the innate immune MAP kinase signaling cascade (MEKK1, MKK4/MKK5 and MPK3/MPK6) downstream of bacterial flagellin receptor FLS2. May be involved in hypersensitive response (HR)-mediated signaling cascade by modulating LIP5 phosphorylation and subsequent multivesicular bodies (MVBs) trafficking. May phosphorylate regulators of WRKY transcription factors. Phosphorylates 1-aminocyclopropane-1-carboxylic acid synthases (ACS2 and ACS6) and may be involved in the regulation of bacterial elicitor flagellin-induced ethylene production. Regulates locally gene-mediated and basal resistance response to certain pathogens. May be involved in the cold and salinity stress-mediated MAP kinase signaling cascade (MEKK1, MKK1/MKK2 and MPK4/MPK6). MKK1-MPK6 module mediates abscisic acid (ABA)-dependent CAT1 expression with H(2)O(2) production and response to drought and salt stress. MKK1-MPK6 module is also involved in sugar signaling during the process of seed germination. MKK3-MPK6 module plays an important role in the jasmonate signal transduction pathway through the negative regulation of MYC2/JIN1 expression. MKK9-MPK3/MPK6 module phosphorylates and activates EIN3, leading to the promotion of EIN3-mediated transcription in ethylene signaling. MPK3/MPK6 cascade regulates camalexin synthesis through transcriptional regulation of the biosynthetic genes after pathogen infection. MKK9-MPK6 module positively regulates leaf senescence. YDA-MKK4/MKK5-MPK3/MPK6 module regulates stomatal cell fate before the guard mother cell (GMC) is specified. When activated, reinforces the feedback loop by phosphorylating BASL, and inhibits stomatal fate by phosphorylating SPCH. This MAPK cascade also functions downstream of the ER receptor in regulating coordinated local cell proliferation, which shapes the morphology of plant organs. The polypeptide is Mitogen-activated protein kinase 6 (Arabidopsis thaliana (Mouse-ear cress)).